The following is a 126-amino-acid chain: Autophagy-related protein 8-like protein DDB_G0290491 (126 aa).

Glycine 123 is lipidated: Phosphatidylethanolamine amidated glycine. A propeptide spans 124 to 126 (removed in mature form); sequence SDI.

This sequence belongs to the ATG8 family.

Its subcellular location is the membrane. The protein is Autophagy-related protein 8-like protein DDB_G0290491 of Dictyostelium discoideum (Social amoeba).